Reading from the N-terminus, the 237-residue chain is Germination-specific N-acetylmuramoyl-L-alanine amidase (237 aa).

The N-terminal stretch at 1-27 (MRKKLKWLSFLLGFIILLFLFKYQFSN) is a signal peptide. The 184-residue stretch at 43–226 (IYLDPGHGGP…VASSIYKGIL (184 aa)) folds into the MurNAc-LAA domain.

This sequence belongs to the N-acetylmuramoyl-L-alanine amidase 3 family.

It localises to the secreted. It carries out the reaction Hydrolyzes the link between N-acetylmuramoyl residues and L-amino acid residues in certain cell-wall glycopeptides.. Functionally, cleaves the peptide side chain from the N-acetylmuramic acid residues in peptidoglycan. This is a step in the formation of muramic delta-lactam residues in spore cortex. The polypeptide is Germination-specific N-acetylmuramoyl-L-alanine amidase (cwlD) (Bacillus subtilis (strain 168)).